The sequence spans 45 residues: Rubredoxin-1 (45 aa).

At Met-1 the chain carries N-formylmethionine. Residues 1–45 (MQKYVCNVCGYEYDPAEHDNVPFDQLPDDWCCPVCGVSKDQFSPA) enclose the Rubredoxin-like domain. The Fe cation site is built by Cys-6, Cys-9, Cys-32, and Cys-35.

The protein belongs to the rubredoxin family. It depends on Fe(3+) as a cofactor.

The protein resides in the cytoplasm. Rubredoxin is a small nonheme, iron protein lacking acid-labile sulfide. Its single Fe, chelated to 4 Cys, functions as an electron acceptor and may also stabilize the conformation of the molecule. In terms of biological role, electron acceptor for cytoplasmic lactate dehydrogenase. This Desulfovibrio desulfuricans (strain ATCC 27774 / DSM 6949 / MB) protein is Rubredoxin-1 (rd1).